Reading from the N-terminus, the 243-residue chain is Probable intron-encoded endonuclease aI3 (243 aa).

This sequence belongs to the LAGLIDADG endonuclease family.

Its subcellular location is the mitochondrion. In terms of biological role, mitochondrial DNA endonuclease involved in intron homing. This is Probable intron-encoded endonuclease aI3 (aI3) from Dictyostelium citrinum (Slime mold).